A 53-amino-acid chain; its full sequence is Rubredoxin-1 (53 aa).

In terms of domain architecture, Rubredoxin-like spans 1 to 53 (MEKFVCDVCGYIYDPVVGDPDNGVAPGTKFKDIPDTWVCPLCKLDKTHFSKVE). Cysteine 6, cysteine 9, cysteine 39, and cysteine 42 together coordinate Fe cation.

This sequence belongs to the rubredoxin family. The cofactor is Fe(3+).

Its function is as follows. Rubredoxin is a small nonheme, iron protein lacking acid-labile sulfide. Its single Fe, chelated to 4 Cys, functions as an electron acceptor and may also stabilize the conformation of the molecule. This Clostridium perfringens (strain 13 / Type A) protein is Rubredoxin-1 (rubR1).